Here is a 49-residue protein sequence, read N- to C-terminus: Disintegrin ocellatin (49 aa).

The Disintegrin domain occupies 1-47; sequence DCESGPCCDNCKFLKEGTICKMARGDNMHHYCNGKTCDCPRNPYKGE. Intrachain disulfides connect cysteine 2-cysteine 11, cysteine 7-cysteine 32, cysteine 8-cysteine 37, and cysteine 20-cysteine 39. Residues 24–26 carry the Cell attachment site motif; that stretch reads RGD.

This sequence belongs to the venom metalloproteinase (M12B) family. P-II subfamily. P-IIa sub-subfamily. In terms of assembly, monomer. In terms of tissue distribution, expressed by the venom gland.

It is found in the secreted. In terms of biological role, inhibits ADP-induced human platelet aggregation. This is Disintegrin ocellatin from Echis ocellatus (Ocellated saw-scaled viper).